The following is a 181-amino-acid chain: Translationally-controlled tumor protein homolog (181 aa).

Residues 1 to 181 (MLIFKDAFTD…VKEALVEEKQ (181 aa)) enclose the TCTP domain.

It belongs to the TCTP family.

Its subcellular location is the cytoplasm. In terms of biological role, involved in calcium binding and microtubule stabilization. This chain is Translationally-controlled tumor protein homolog, found in Wuchereria bancrofti.